Here is a 306-residue protein sequence, read N- to C-terminus: MQKYDIKTFQGMILALQDYWAQNGCTIVQPLDMEVGAGTSHPMTCLRALGPEPMSTAYVQPSRRPTDGRYGENPNRLQHYYQFQVALKPSPDNIQELYLGSLEVLGIDPLVHDIRFVEDNWENPTLGAWGLGWEIWLNGMEVTQFTYFQQVGGLECKPVTGEITYGIERLAMYIQEVDSVYDLVWNIGPDGTAVTYGDIFHQNEVEQSTYNFEHADVDFLFGFFDQCEKESKELLELEKPLPLPAYERILKAAHAFNLLDARKAISVTERQRYILRIRNLTKAVAEAYYASREALGFPMCKKNEEK.

This sequence belongs to the class-II aminoacyl-tRNA synthetase family. As to quaternary structure, tetramer of two alpha and two beta subunits.

The protein resides in the cytoplasm. The enzyme catalyses tRNA(Gly) + glycine + ATP = glycyl-tRNA(Gly) + AMP + diphosphate. In Aliivibrio fischeri (strain ATCC 700601 / ES114) (Vibrio fischeri), this protein is Glycine--tRNA ligase alpha subunit.